The following is a 142-amino-acid chain: Transcriptional regulator MraZ (142 aa).

SpoVT-AbrB domains follow at residues 5 to 47 and 76 to 119; these read EYQH…PLDE and ACEV…SKEK.

It belongs to the MraZ family. Forms oligomers.

The protein localises to the cytoplasm. The protein resides in the nucleoid. The polypeptide is Transcriptional regulator MraZ (Clostridium beijerinckii (strain ATCC 51743 / NCIMB 8052) (Clostridium acetobutylicum)).